Here is a 414-residue protein sequence, read N- to C-terminus: COUP transcription factor 2 (414 aa).

Residues 1–72 (MAMVVSTWRD…PGGPGSDKQQ (72 aa)) are disordered. The segment covering 27–37 (PPVPGPPPGAP) has biased composition (pro residues). Positions 38–57 (HTPQTPGQGGPASTPAQTAA) are enriched in low complexity. Phosphothreonine is present on threonine 51. Positions 58 to 67 (GGQGGPGGPG) are enriched in gly residues. A DNA-binding region (nuclear receptor) is located at residues 76–151 (HIECVVCGDK…VGMRREAVQR (76 aa)). 2 consecutive NR C4-type zinc fingers follow at residues 79 to 99 (CVVCGDKSSGKHYGQFTCEGC) and 115 to 139 (CRANRNCPIDQHHRNQCQYCRLKKC). The tract at residues 117–414 (ANRNCPIDQH…SFNWPYMAIQ (298 aa)) is interaction with ZFPM2. The NR LBD domain occupies 177-403 (YLSGYISLLL…TLIRDMLLSG (227 aa)). The interval 337-414 (LQEKSQCALE…SFNWPYMAIQ (78 aa)) is important for dimerization.

It belongs to the nuclear hormone receptor family. NR2 subfamily. As to quaternary structure, interacts with SQSTM1. Binds DNA as a dimer; homodimer or heterodimer with NR2F6. Interacts with NCOA1, NCOA2, NCOA3 and PPARGC1A. Interacts with ZFPM2. Ubiquitous. Expressed in the stromal cells of developing fetal ovaries.

It localises to the nucleus. Its function is as follows. Ligand-activated transcription factor. Activated by high concentrations of 9-cis-retinoic acid and all-trans-retinoic acid, but not by dexamethasone, cortisol or progesterone (in vitro). Regulation of the apolipoprotein A-I gene transcription. Binds to DNA site A. May be required to establish ovary identity during early gonad development. This Homo sapiens (Human) protein is COUP transcription factor 2 (NR2F2).